The primary structure comprises 337 residues: Eukaryotic translation initiation factor 3 subunit H (337 aa).

The MPN domain maps to 21-153 (VQCDGLAVMK…LKAYRLTPQA (133 aa)).

It belongs to the eIF-3 subunit H family. Component of the eukaryotic translation initiation factor 3 (eIF-3) complex. The eIF-3 complex interacts with pix. Interacts with mxt.

The protein localises to the cytoplasm. Its function is as follows. Component of the eukaryotic translation initiation factor 3 (eIF-3) complex, which is involved in protein synthesis of a specialized repertoire of mRNAs and, together with other initiation factors, stimulates binding of mRNA and methionyl-tRNAi to the 40S ribosome. The eIF-3 complex specifically targets and initiates translation of a subset of mRNAs involved in cell proliferation. This Drosophila grimshawi (Hawaiian fruit fly) protein is Eukaryotic translation initiation factor 3 subunit H.